Reading from the N-terminus, the 163-residue chain is NADPH-dependent 7-cyano-7-deazaguanine reductase (163 aa).

The Thioimide intermediate role is filled by Cys54. Catalysis depends on Asp61, which acts as the Proton donor. Substrate is bound by residues 76–78 (VES) and 95–96 (HE).

The protein belongs to the GTP cyclohydrolase I family. QueF type 1 subfamily.

It localises to the cytoplasm. The catalysed reaction is 7-aminomethyl-7-carbaguanine + 2 NADP(+) = 7-cyano-7-deazaguanine + 2 NADPH + 3 H(+). The protein operates within tRNA modification; tRNA-queuosine biosynthesis. Catalyzes the NADPH-dependent reduction of 7-cyano-7-deazaguanine (preQ0) to 7-aminomethyl-7-deazaguanine (preQ1). The sequence is that of NADPH-dependent 7-cyano-7-deazaguanine reductase from Streptococcus thermophilus (strain CNRZ 1066).